We begin with the raw amino-acid sequence, 365 residues long: MSIEIANIKKSFGRTQVLNDISLDIPSGQMVALLGPSGSGKTTLLRIIAGLEHQTSGHIRFHGTDVSRLHARDRKVGFVFQHYALFRHMTVFDNIAFGLTVLPRRERPNAAAIKAKVTKLLEMVQLAHLADRYPAQLSGGQKQRVALARALAVEPQILLLDEPFGALDAQVRKELRRWLRQLHEELKFTSVFVTHDQEEATEVADRVVVMSQGNIEQADAPDQVWREPATRFVLEFMGEVNRLQGTIRGGQFHVGAHRWPLGYTPAYQGPVDLFLRPWEVDISRRTSLDSPLPVQVLEASPKGHYTQLVVQPLGWYNEPLTVVMHGDDAPQRGDRLYVGLQHARLYNGDERIETRDEELALAQSA.

The ABC transporter domain occupies 3–237; the sequence is IEIANIKKSF…PATRFVLEFM (235 aa). 35–42 lines the ATP pocket; sequence GPSGSGKT.

The protein belongs to the ABC transporter superfamily. Sulfate/tungstate importer (TC 3.A.1.6) family. As to quaternary structure, the complex is composed of two ATP-binding proteins (CysA), two transmembrane proteins (CysT and CysW) and a solute-binding protein (CysP).

It localises to the cell inner membrane. The catalysed reaction is sulfate(out) + ATP + H2O = sulfate(in) + ADP + phosphate + H(+). The enzyme catalyses thiosulfate(out) + ATP + H2O = thiosulfate(in) + ADP + phosphate + H(+). Part of the ABC transporter complex CysAWTP involved in sulfate/thiosulfate import. Responsible for energy coupling to the transport system. This Escherichia coli O6:H1 (strain CFT073 / ATCC 700928 / UPEC) protein is Sulfate/thiosulfate import ATP-binding protein CysA.